Here is a 402-residue protein sequence, read N- to C-terminus: Zinc finger protein 587B (402 aa).

A KRAB domain is found at 15-91 (VTFEDVAVKF…PVTGVSPKKA (77 aa)). A C2H2-type 1 zinc finger spans residues 92–114 (HPCEMCGPILGDILHVADHQGTH). The segment at 120–142 (HRCEAWGNKLYDSGNFHQHQNEH) adopts a C2H2-type 2; degenerate zinc-finger fold. Glycyl lysine isopeptide (Lys-Gly) (interchain with G-Cter in SUMO2) cross-links involve residues Lys177, Lys200, and Lys253. 5 C2H2-type zinc fingers span residues 242 to 264 (YVCC…QRVH), 270 to 292 (YECG…QQFH), 298 to 320 (YGCE…QKVH), 326 to 348 (YECG…QRIH), and 354 to 383 (YKCG…WVDH). Lys366 is covalently cross-linked (Glycyl lysine isopeptide (Lys-Gly) (interchain with G-Cter in SUMO2)).

The protein belongs to the krueppel C2H2-type zinc-finger protein family.

The protein resides in the nucleus. May be involved in transcriptional regulation. In Homo sapiens (Human), this protein is Zinc finger protein 587B (ZNF587B).